We begin with the raw amino-acid sequence, 511 residues long: MSAFLEFRGISKVFPGVRALSEVSFGIECGRVHGLLGENGAGKSTLLKILGGDYQPDGGQIAVEGRPVAFPNARAALAAGIAVIHQELQTVPELTVMDNLLLGHLPSRGGFIRQGEAMAWTRAQLARIGVDLDPKARLKHLSIGQRQMVEICKAILRDARVIALDEPTSSLSVRETDILFRLVKDLRAQGRALIYISHRLDEIFALCDGCTIFRDGRKVADFRSMADVTREQLVAQMVGRQIDDIFGYRPRAPGDVRLRVEGLMGPKLAEPASFAVRRGEIVGLFGLVGAGRSELARLVYGADRKTAGTVVLDGEPIRIRAVADAIRQGIVLCPEDRKEEGIIGCRSVSENINISCRRNRRPGWGGFNLFVDDRQEAKTADHYIARLRIKTPHRDQPIRLLSGGNQQKAILARWLAEDGMRVLIIDEPTRGIDVGAKNEIYQVLYELAERGVAVLMISSELPEILGVADRVLVMSEGRIAGELPRAQATEHAVLNLALRPRRDPCVAAQAA.

ABC transporter domains are found at residues 5–240 (LEFR…MVGR) and 240–501 (RQID…LRPR). 37 to 44 (GENGAGKS) is an ATP binding site.

Belongs to the ABC transporter superfamily. Arabinose importer (TC 3.A.1.2.2) family. In terms of assembly, the complex is composed of two ATP-binding proteins (AraG), two transmembrane proteins (AraH) and a solute-binding protein (AraF).

It localises to the cell inner membrane. It catalyses the reaction L-arabinose(out) + ATP + H2O = L-arabinose(in) + ADP + phosphate + H(+). Its function is as follows. Part of the ABC transporter complex AraFGH involved in arabinose import. Responsible for energy coupling to the transport system. The polypeptide is Arabinose import ATP-binding protein AraG (Ralstonia nicotianae (strain ATCC BAA-1114 / GMI1000) (Ralstonia solanacearum)).